A 141-amino-acid polypeptide reads, in one-letter code: Putative pre-16S rRNA nuclease (141 aa).

Belongs to the YqgF nuclease family.

It is found in the cytoplasm. In terms of biological role, could be a nuclease involved in processing of the 5'-end of pre-16S rRNA. This is Putative pre-16S rRNA nuclease from Aliivibrio fischeri (strain ATCC 700601 / ES114) (Vibrio fischeri).